The following is a 928-amino-acid chain: DNA polymerase I (928 aa).

Residues 1–323 (MVQIPENPLI…IDESPSEPAA (323 aa)) form the 5'-3' exonuclease domain. In terms of domain architecture, 3'-5' exonuclease spans 324 to 517 (ALSYENYVTI…LHLKMWPELQ (194 aa)). Residues 324-928 (ALSYENYVTI…GSGENWDQAH (605 aa)) form a klenow fragment region. A polymerase region spans residues 521-928 (GPLNVFENIE…GSGENWDQAH (408 aa)).

Belongs to the DNA polymerase type-A family. As to quaternary structure, single-chain monomer with multiple functions.

It carries out the reaction DNA(n) + a 2'-deoxyribonucleoside 5'-triphosphate = DNA(n+1) + diphosphate. In terms of biological role, in addition to polymerase activity, this DNA polymerase exhibits 3'-5' and 5'-3' exonuclease activity. It is able to utilize nicked circular duplex DNA as a template and can unwind the parental DNA strand from its template. The protein is DNA polymerase I (polA) of Salmonella typhimurium (strain LT2 / SGSC1412 / ATCC 700720).